The primary structure comprises 118 residues: Galanin peptides (118 aa).

The first 19 residues, 1-19, serve as a signal peptide directing secretion; the sequence is MHRCVGGVCVSLIVCAFLT. A propeptide spanning residues 20 to 30 is cleaved from the precursor; sequence ETLGMVIAAKE. Residue Ala-61 is modified to Alanine amide.

Belongs to the galanin family. As to expression, strongly expressed in brain and stomach, moderately in the eye, and very weakly in heart, kidney and gills. Not detected in liver.

The protein resides in the secreted. In terms of biological role, endocrine hormone of the central and peripheral nervous systems that binds and activates the G protein-coupled receptors GALR1 (galr1a and galr1b) and GALR2 (galr2a and galr2b). This small neuropeptide may regulate diverse physiologic functions including contraction of smooth muscle of the gastrointestinal and genitourinary tract, growth hormone and insulin release and adrenal secretion. The sequence is that of Galanin peptides from Danio rerio (Zebrafish).